Here is a 444-residue protein sequence, read N- to C-terminus: Phosphoglucosamine mutase (444 aa).

Catalysis depends on Ser-103, which acts as the Phosphoserine intermediate. Mg(2+) contacts are provided by Ser-103, Asp-241, Asp-243, and Asp-245. The residue at position 103 (Ser-103) is a Phosphoserine.

It belongs to the phosphohexose mutase family. It depends on Mg(2+) as a cofactor. Post-translationally, activated by phosphorylation.

It catalyses the reaction alpha-D-glucosamine 1-phosphate = D-glucosamine 6-phosphate. Catalyzes the conversion of glucosamine-6-phosphate to glucosamine-1-phosphate. The sequence is that of Phosphoglucosamine mutase from Deinococcus radiodurans (strain ATCC 13939 / DSM 20539 / JCM 16871 / CCUG 27074 / LMG 4051 / NBRC 15346 / NCIMB 9279 / VKM B-1422 / R1).